The sequence spans 815 residues: Phosphate transporter PHO1-2 (815 aa).

Over M1–T421 the chain is Cytoplasmic. Residues V2–S368 form the SPX domain. 3 disordered regions span residues S83–K108, R166–Q213, and A242–G266. Residues P97–K108 are compositionally biased toward basic and acidic residues. The segment covering P183 to S201 has biased composition (low complexity). The segment covering P202–Q213 has biased composition (polar residues). Basic and acidic residues predominate over residues G243–G254. Residues K255–G266 show a composition bias toward gly residues. Residues F422–A442 form a helical membrane-spanning segment. The Extracellular segment spans residues H443–E458. A helical membrane pass occupies residues I459–C479. Topologically, residues N480–A508 are cytoplasmic. Residues F509 to L529 traverse the membrane as a helical segment. Residues K530–N538 lie on the Extracellular side of the membrane. Residues A539–F559 traverse the membrane as a helical segment. At Y560–T686 the chain is on the cytoplasmic side. The EXS domain maps to T624–D815. A helical membrane pass occupies residues P687–W707. Over D708 to K734 the chain is Extracellular. A helical membrane pass occupies residues S735–W751. Residues T752–D815 lie on the Cytoplasmic side of the membrane.

It belongs to the SYG1 (TC 2.A.94) family. Specifically expressed in roots.

Its subcellular location is the cell membrane. Its function is as follows. Involved in the transfer of inorganic phosphate (Pi) from roots to shoots. This chain is Phosphate transporter PHO1-2 (PHO1-2), found in Oryza sativa subsp. japonica (Rice).